The chain runs to 86 residues: Anti-adapter protein IraP (86 aa).

A coiled-coil region spans residues 1 to 36 (MKNLIAELLVKLAEKEEESKELVAQVEALEIVVTAL).

The protein belongs to the IraP family. As to quaternary structure, interacts with RssB.

It localises to the cytoplasm. Its function is as follows. Inhibits RpoS proteolysis by regulating RssB activity, thereby increasing the stability of the sigma stress factor RpoS especially during phosphate starvation, but also in stationary phase and during nitrogen starvation. Its effect on RpoS stability is due to its interaction with RssB, which probably blocks the interaction of RssB with RpoS, and the consequent delivery of the RssB-RpoS complex to the ClpXP protein degradation pathway. This is Anti-adapter protein IraP from Cronobacter sakazakii (strain ATCC BAA-894) (Enterobacter sakazakii).